The chain runs to 278 residues: Undecaprenyl-diphosphatase 2 (278 aa).

A run of 7 helical transmembrane segments spans residues 1–21 (MSIIEAIIIGIVQGITEFLPI), 38–58 (FPGFGFEIFLHIASILAVILY), 85–105 (FMFAIYIIVATGITGVLGLLL), 118–138 (FIAGALIITGTFLIIIERFFV), 191–211 (SFLLSIPVILGTSVLAIGDLL), 223–243 (PLIISFIVTFFFSWLGIIWLI), and 251–271 (LIYFAFYCFALAIFVFFYFDH).

The protein belongs to the UppP family.

Its subcellular location is the cell membrane. It carries out the reaction di-trans,octa-cis-undecaprenyl diphosphate + H2O = di-trans,octa-cis-undecaprenyl phosphate + phosphate + H(+). In terms of biological role, catalyzes the dephosphorylation of undecaprenyl diphosphate (UPP). Confers resistance to bacitracin. In Halalkalibacterium halodurans (strain ATCC BAA-125 / DSM 18197 / FERM 7344 / JCM 9153 / C-125) (Bacillus halodurans), this protein is Undecaprenyl-diphosphatase 2.